A 307-amino-acid polypeptide reads, in one-letter code: S-methyl-5'-thioadenosine phosphorylase (307 aa).

Residues Thr-20, 62-63, and 95-96 contribute to the phosphate site; these read RH and SA. Met-197 provides a ligand contact to substrate. Ser-198 lines the phosphate pocket. 221-223 lines the substrate pocket; the sequence is DYD.

This sequence belongs to the PNP/MTAP phosphorylase family. MTAP subfamily. As to quaternary structure, homotrimer.

It localises to the cytoplasm. The protein resides in the nucleus. The catalysed reaction is S-methyl-5'-thioadenosine + phosphate = 5-(methylsulfanyl)-alpha-D-ribose 1-phosphate + adenine. It functions in the pathway amino-acid biosynthesis; L-methionine biosynthesis via salvage pathway; S-methyl-5-thio-alpha-D-ribose 1-phosphate from S-methyl-5'-thioadenosine (phosphorylase route): step 1/1. Functionally, catalyzes the reversible phosphorylation of S-methyl-5'-thioadenosine (MTA) to adenine and 5-methylthioribose-1-phosphate. Involved in the breakdown of MTA, a major by-product of polyamine biosynthesis. Responsible for the first step in the methionine salvage pathway after MTA has been generated from S-adenosylmethionine. Has broad substrate specificity with 6-aminopurine nucleosides as preferred substrates. The sequence is that of S-methyl-5'-thioadenosine phosphorylase from Fusarium vanettenii (strain ATCC MYA-4622 / CBS 123669 / FGSC 9596 / NRRL 45880 / 77-13-4) (Fusarium solani subsp. pisi).